A 566-amino-acid chain; its full sequence is NAD-dependent malic enzyme (566 aa).

Catalysis depends on Tyr104, which acts as the Proton donor. An NAD(+)-binding site is contributed by Arg157. The Proton acceptor role is filled by Lys175. A divalent metal cation-binding residues include Glu246, Asp247, and Asp270. Residues Asp270 and Asn419 each coordinate NAD(+).

This sequence belongs to the malic enzymes family. Homotetramer. It depends on Mg(2+) as a cofactor. Mn(2+) serves as cofactor.

It carries out the reaction (S)-malate + NAD(+) = pyruvate + CO2 + NADH. The enzyme catalyses oxaloacetate + H(+) = pyruvate + CO2. The protein is NAD-dependent malic enzyme of Cronobacter sakazakii (strain ATCC BAA-894) (Enterobacter sakazakii).